The following is a 629-amino-acid chain: tRNA uridine 5-carboxymethylaminomethyl modification enzyme MnmG (629 aa).

Residues 13-18, V125, and S180 contribute to the FAD site; that span reads GGGHAG. 273 to 287 contributes to the NAD(+) binding site; it reads GPRYCPSIEDKVMRF. Q370 provides a ligand contact to FAD.

The protein belongs to the MnmG family. As to quaternary structure, homodimer. Heterotetramer of two MnmE and two MnmG subunits. The cofactor is FAD.

The protein localises to the cytoplasm. Its function is as follows. NAD-binding protein involved in the addition of a carboxymethylaminomethyl (cmnm) group at the wobble position (U34) of certain tRNAs, forming tRNA-cmnm(5)s(2)U34. The polypeptide is tRNA uridine 5-carboxymethylaminomethyl modification enzyme MnmG (Salmonella arizonae (strain ATCC BAA-731 / CDC346-86 / RSK2980)).